Consider the following 196-residue polypeptide: ATP-dependent Clp protease proteolytic subunit (196 aa).

Serine 98 (nucleophile) is an active-site residue. Residue histidine 123 is part of the active site.

This sequence belongs to the peptidase S14 family. As to quaternary structure, fourteen ClpP subunits assemble into 2 heptameric rings which stack back to back to give a disk-like structure with a central cavity, resembling the structure of eukaryotic proteasomes.

It localises to the cytoplasm. The enzyme catalyses Hydrolysis of proteins to small peptides in the presence of ATP and magnesium. alpha-casein is the usual test substrate. In the absence of ATP, only oligopeptides shorter than five residues are hydrolyzed (such as succinyl-Leu-Tyr-|-NHMec, and Leu-Tyr-Leu-|-Tyr-Trp, in which cleavage of the -Tyr-|-Leu- and -Tyr-|-Trp bonds also occurs).. Its function is as follows. Cleaves peptides in various proteins in a process that requires ATP hydrolysis. Has a chymotrypsin-like activity. Plays a major role in the degradation of misfolded proteins. This chain is ATP-dependent Clp protease proteolytic subunit, found in Acidobacterium capsulatum (strain ATCC 51196 / DSM 11244 / BCRC 80197 / JCM 7670 / NBRC 15755 / NCIMB 13165 / 161).